The following is a 311-amino-acid chain: Methionyl-tRNA formyltransferase (311 aa).

A (6S)-5,6,7,8-tetrahydrofolate-binding site is contributed by 110-113; it reads SLLP.

Belongs to the Fmt family.

It carries out the reaction L-methionyl-tRNA(fMet) + (6R)-10-formyltetrahydrofolate = N-formyl-L-methionyl-tRNA(fMet) + (6S)-5,6,7,8-tetrahydrofolate + H(+). Its function is as follows. Attaches a formyl group to the free amino group of methionyl-tRNA(fMet). The formyl group appears to play a dual role in the initiator identity of N-formylmethionyl-tRNA by promoting its recognition by IF2 and preventing the misappropriation of this tRNA by the elongation apparatus. This chain is Methionyl-tRNA formyltransferase, found in Sulfurihydrogenibium sp. (strain YO3AOP1).